The sequence spans 211 residues: ATP-dependent dethiobiotin synthetase BioD (211 aa).

Residue 10–15 coordinates ATP; the sequence is GIGKTY. Mg(2+) is bound at residue threonine 14. Lysine 35 is a catalytic residue. Residue serine 39 coordinates substrate. Residues aspartate 44, 105–108, and 165–166 each bind ATP; these read EGAG and NC. The Mg(2+) site is built by aspartate 44 and glutamate 105.

The protein belongs to the dethiobiotin synthetase family. In terms of assembly, homodimer. Mg(2+) is required as a cofactor.

It localises to the cytoplasm. It carries out the reaction (7R,8S)-7,8-diammoniononanoate + CO2 + ATP = (4R,5S)-dethiobiotin + ADP + phosphate + 3 H(+). It participates in cofactor biosynthesis; biotin biosynthesis; biotin from 7,8-diaminononanoate: step 1/2. Catalyzes a mechanistically unusual reaction, the ATP-dependent insertion of CO2 between the N7 and N8 nitrogen atoms of 7,8-diaminopelargonic acid (DAPA, also called 7,8-diammoniononanoate) to form a ureido ring. This Methanococcus vannielii (strain ATCC 35089 / DSM 1224 / JCM 13029 / OCM 148 / SB) protein is ATP-dependent dethiobiotin synthetase BioD.